The following is a 485-amino-acid chain: Aspartyl/glutamyl-tRNA(Asn/Gln) amidotransferase subunit B (485 aa).

Belongs to the GatB/GatE family. GatB subfamily. In terms of assembly, heterotrimer of A, B and C subunits.

It carries out the reaction L-glutamyl-tRNA(Gln) + L-glutamine + ATP + H2O = L-glutaminyl-tRNA(Gln) + L-glutamate + ADP + phosphate + H(+). The catalysed reaction is L-aspartyl-tRNA(Asn) + L-glutamine + ATP + H2O = L-asparaginyl-tRNA(Asn) + L-glutamate + ADP + phosphate + 2 H(+). Its function is as follows. Allows the formation of correctly charged Asn-tRNA(Asn) or Gln-tRNA(Gln) through the transamidation of misacylated Asp-tRNA(Asn) or Glu-tRNA(Gln) in organisms which lack either or both of asparaginyl-tRNA or glutaminyl-tRNA synthetases. The reaction takes place in the presence of glutamine and ATP through an activated phospho-Asp-tRNA(Asn) or phospho-Glu-tRNA(Gln). This Bordetella avium (strain 197N) protein is Aspartyl/glutamyl-tRNA(Asn/Gln) amidotransferase subunit B.